Here is a 367-residue protein sequence, read N- to C-terminus: MLMRFSRVVSLVLLLVFTAVLTGAVKASLNDKPVGFASVPTADLPEGTVGGLGGEIVFVRTAEELEKYTTAEGKYVIVVDGTIVFEPKREIKVLSDKTIVGINDAKIVGGGLVIKDAQNVIIRNIHFEGFYMEDDPRGKKYDFDYINVENSHHIWIDHCTFVNGNDGAVDIKKYSNYITVSWCKFVDHDKVSLVGSSDKEDPEQAGQAYKVTYHHNYFKNCIQRMPRIRFGMAHVFNNFYSMGLRTGVSGNVFPIYGVASAMGAKVHVEGNYFMGYGAVMAEAGIAFLPTRIMGPVEGYLTLGEGDAKNEFYYCKEPEVRPVEEGKPALDPREYYDYTLDPVQDVPKIVVDGAGAGKLVFEELNTAQ.

A signal peptide spans 1–27 (MLMRFSRVVSLVLLLVFTAVLTGAVKA). The Ca(2+) site is built by aspartate 144, aspartate 166, and aspartate 170. The PbH1 1 repeat unit spans residues 151 to 173 (SHHIWIDHCTFVNGNDGAVDIKK). Arginine 224 is an active-site residue. One copy of the PbH1 2 repeat lies at 263–289 (GAKVHVEGNYFMGYGAVMAEAGIAFLP).

It belongs to the polysaccharide lyase 1 family. In terms of assembly, homotetramer. Requires Ca(2+) as cofactor.

The protein resides in the secreted. It catalyses the reaction eliminative cleavage of unsaturated trigalacturonate as the major product from the reducing end of polygalacturonic acid/pectate.. Its activity is regulated as follows. Completely inactivated by EGTA. In terms of biological role, cleaves unsaturated trigalacturonate from pectin. Activity is highest towards polygalacturonic acid, activity on methylated pectins decreases with an increasing degree of methylation. The sequence is that of Pectate trisaccharide-lyase from Thermotoga maritima (strain ATCC 43589 / DSM 3109 / JCM 10099 / NBRC 100826 / MSB8).